The following is a 360-amino-acid chain: Protein phosphatase 1 regulatory subunit 7 (360 aa).

A disordered region spans residues 1 to 64 (MAAERGAGQQ…GEEDPEEEHE (64 aa)). A2 carries the post-translational modification N-acetylalanine. Phosphoserine is present on residues S12, S24, S27, S44, and S47. Residues 17 to 34 (EVDRRVESEESGDEEGKK) are compositionally biased toward basic and acidic residues. Residues 53–63 (ERGEEDPEEEH) show a composition bias toward acidic residues. LRR repeat units follow at residues 77–98 (DAED…EVLK), 99–120 (KVKT…EELQ), 121–142 (SLRE…EALT), 143–164 (ELEI…DKVT), 165–186 (QLKK…SNLH), 187–208 (QLQM…DTLT), 209–230 (NLES…DALT), 231–252 (NLTV…QNLV), 253–274 (NLQE…ENNN), 275–296 (KLTM…SHLT), and 297–318 (EPQE…DELK). S322 carries the phosphoserine modification. One can recognise an LRRCT domain in the interval 331–360 (NPLQKDPQYRRKVMLALPSVRQIDATFVRF).

This sequence belongs to the SDS22 family. As to quaternary structure, interacts with PPP1CA, PPP1CB and PPP1CC/PPP1G.

It is found in the nucleus. Regulatory subunit of protein phosphatase 1. The chain is Protein phosphatase 1 regulatory subunit 7 (PPP1R7) from Pongo abelii (Sumatran orangutan).